The following is a 697-amino-acid chain: Long-chain-fatty-acid--CoA ligase 6 (697 aa).

A helical; Signal-anchor for type III membrane protein transmembrane segment spans residues L25–T45. The Cytoplasmic segment spans residues H46–V697.

This sequence belongs to the ATP-dependent AMP-binding enzyme family. Mg(2+) serves as cofactor.

The protein resides in the mitochondrion outer membrane. It localises to the peroxisome membrane. The protein localises to the microsome membrane. Its subcellular location is the endoplasmic reticulum membrane. It carries out the reaction a long-chain fatty acid + ATP + CoA = a long-chain fatty acyl-CoA + AMP + diphosphate. The enzyme catalyses (5Z,8Z,11Z,14Z)-eicosatetraenoate + ATP + CoA = (5Z,8Z,11Z,14Z)-eicosatetraenoyl-CoA + AMP + diphosphate. The catalysed reaction is 15-hydroxy-(5Z,8Z,11Z,13E)-eicosatetraenoate + ATP + CoA = 15-hydroxy-(5Z,8Z,11Z,13E)-eicosatetraenoyl-CoA + AMP + diphosphate. It catalyses the reaction 12-hydroxy-(5Z,8Z,10E,14Z)-eicosatetraenoate + ATP + CoA = 12-hydroxy-(5Z,8Z,10E,14Z)-eicosatetraenoyl-CoA + AMP + diphosphate. It carries out the reaction 5-hydroxy-(6E,8Z,11Z,14Z)-eicosatetraenoate + ATP + CoA = 5-hydroxy-(6E,8Z,11Z,14Z)-eicosatetraenoyl-CoA + AMP + diphosphate. The enzyme catalyses hexadecanoate + ATP + CoA = hexadecanoyl-CoA + AMP + diphosphate. The catalysed reaction is (E)-hexadec-2-enoate + ATP + CoA = (2E)-hexadecenoyl-CoA + AMP + diphosphate. Functionally, catalyzes the conversion of long-chain fatty acids to their active form acyl-CoA for both synthesis of cellular lipids, and degradation via beta-oxidation. Plays an important role in fatty acid metabolism in brain and the acyl-CoAs produced may be utilized exclusively for the synthesis of the brain lipid. The polypeptide is Long-chain-fatty-acid--CoA ligase 6 (Acsl6) (Mus musculus (Mouse)).